An 87-amino-acid chain; its full sequence is Small ribosomal subunit protein uS17 (87 aa).

The protein belongs to the universal ribosomal protein uS17 family. As to quaternary structure, part of the 30S ribosomal subunit.

In terms of biological role, one of the primary rRNA binding proteins, it binds specifically to the 5'-end of 16S ribosomal RNA. The sequence is that of Small ribosomal subunit protein uS17 from Chromobacterium violaceum (strain ATCC 12472 / DSM 30191 / JCM 1249 / CCUG 213 / NBRC 12614 / NCIMB 9131 / NCTC 9757 / MK).